A 354-amino-acid chain; its full sequence is MRARPQVCEALLFALALHTGVCYGIKWLALSKTPAALALNQTQHCKQLEGLVSAQVQLCRSNLELMRTIVHAARGAMKACRRAFADMRWNCSSIELAPNYLLDLERGTRESAFVYALSAATISHTIARACTSGDLPGCSCGPVPGEPPGPGNRWGGCADNLSYGLLMGAKFSDAPMKVKKTGSQANKLMRLHNSEVGRQALRASLETKCKCHGVSGSCSIRTCWKGLQELQDVAADLKTRYLSATKVVHRPMGTRKHLVPKDLDIRPVKDSELVYLQSSPDFCMKNEKVGSHGTQDRQCNKTSNGSDSCDLMCCGRGYNPYTDRVVERCHCKYHWCCYVTCRRCERTVERYVCK.

An N-terminal signal peptide occupies residues 1 to 24 (MRARPQVCEALLFALALHTGVCYG). N-linked (GlcNAc...) asparagine glycans are attached at residues asparagine 40 and asparagine 90. 3 disulfide bridges follow: cysteine 80/cysteine 91, cysteine 130/cysteine 138, and cysteine 140/cysteine 157. N-linked (GlcNAc...) asparagine glycosylation occurs at asparagine 160. Cystine bridges form between cysteine 209-cysteine 223, cysteine 211-cysteine 218, cysteine 283-cysteine 314, cysteine 299-cysteine 309, cysteine 313-cysteine 353, cysteine 329-cysteine 344, cysteine 331-cysteine 341, and cysteine 336-cysteine 337. Serine 215 carries the O-palmitoleoyl serine; by PORCN lipid modification. N-linked (GlcNAc...) asparagine glycosylation is found at asparagine 300 and asparagine 304.

This sequence belongs to the Wnt family. Palmitoleoylation is required for efficient binding to frizzled receptors. Depalmitoleoylation leads to Wnt signaling pathway inhibition.

It is found in the secreted. It localises to the extracellular space. The protein resides in the extracellular matrix. Its function is as follows. Ligand for members of the frizzled family of seven transmembrane receptors. Probable developmental protein. May be a signaling molecule which affects the development of discrete regions of tissues. Is likely to signal over only few cell diameters. This is Protein Wnt-11 (Wnt11) from Mus musculus (Mouse).